A 335-amino-acid chain; its full sequence is uncharacterized protein (335 aa).

Solcar repeat units follow at residues 22-129 (VKPI…LLPL), 134-227 (GFPA…IRLF), and 244-327 (KDLY…TKKY). 6 consecutive transmembrane segments (helical) span residues 28-48 (MLSA…LDVV), 104-123 (GLVP…FLGY), 133-154 (WGFP…ATIV), 195-219 (GILN…FYWW), 246-263 (LYIN…ATLL), and 307-323 (CVKV…SYHL).

This sequence belongs to the mitochondrial carrier (TC 2.A.29) family.

It is found in the mitochondrion inner membrane. This is an uncharacterized protein from Schizosaccharomyces pombe (strain 972 / ATCC 24843) (Fission yeast).